Reading from the N-terminus, the 34-residue chain is Photosystem II reaction center protein M (34 aa).

The chain crosses the membrane as a helical span at residues 5 to 25 (ILAFIATALFILVPTAFLLII).

It belongs to the PsbM family. In terms of assembly, PSII is composed of 1 copy each of membrane proteins PsbA, PsbB, PsbC, PsbD, PsbE, PsbF, PsbH, PsbI, PsbJ, PsbK, PsbL, PsbM, PsbT, PsbX, PsbY, PsbZ, Psb30/Ycf12, at least 3 peripheral proteins of the oxygen-evolving complex and a large number of cofactors. It forms dimeric complexes.

It is found in the plastid. The protein resides in the chloroplast thylakoid membrane. In terms of biological role, one of the components of the core complex of photosystem II (PSII). PSII is a light-driven water:plastoquinone oxidoreductase that uses light energy to abstract electrons from H(2)O, generating O(2) and a proton gradient subsequently used for ATP formation. It consists of a core antenna complex that captures photons, and an electron transfer chain that converts photonic excitation into a charge separation. This subunit is found at the monomer-monomer interface. The protein is Photosystem II reaction center protein M of Cenchrus americanus (Pearl millet).